Reading from the N-terminus, the 368-residue chain is Spermidine/putrescine import ATP-binding protein PotA (368 aa).

The region spanning 8–238 (IELKNVSKIF…PVNLFVARFV (231 aa)) is the ABC transporter domain. Position 40–47 (40–47 (GPSGCGKT)) interacts with ATP.

The protein belongs to the ABC transporter superfamily. Spermidine/putrescine importer (TC 3.A.1.11.1) family. The complex is composed of two ATP-binding proteins (PotA), two transmembrane proteins (PotB and PotC) and a solute-binding protein (PotD).

It is found in the cell membrane. The enzyme catalyses ATP + H2O + polyamine-[polyamine-binding protein]Side 1 = ADP + phosphate + polyamineSide 2 + [polyamine-binding protein]Side 1.. Part of the ABC transporter complex PotABCD involved in spermidine/putrescine import. Responsible for energy coupling to the transport system. This is Spermidine/putrescine import ATP-binding protein PotA from Lawsonia intracellularis (strain PHE/MN1-00).